A 3305-amino-acid chain; its full sequence is Apolipophorins (3305 aa).

The first 23 residues, 1-23 (MGKSNRLLSVLFVISVLWKAAYG), serve as a signal peptide directing secretion. Positions 39–640 (FAAGQKYNYG…SQTSFLPRSV (602 aa)) constitute a Vitellogenin domain. Asn-643 and Asn-2769 each carry an N-linked (GlcNAc...) asparagine glycan. The VWFD domain occupies 2733 to 2899 (LRAVVVNGQH…NSYRLSRSCP (167 aa)). A disulfide bridge connects residues Cys-2757 and Cys-2898.

In terms of processing, cleaved into 2 chains by furin protease. However, prevention of cleavage does not impair its function. Post-translationally, N-glycosylated.

It is found in the secreted. Its function is as follows. Constitutes the major component of lipophorin, which mediates transport for various types of lipids in hemolymph. Acts by forming lipoprotein particles that bind lipoproteins and lipids. May be required for morphogens wingless (wg) and hedgehog (hh) function, possibly by acting as vehicles for the movement of wg and hh. This chain is Apolipophorins, found in Manduca sexta (Tobacco hawkmoth).